The chain runs to 21 residues: CSCADMTDKECLYFCHQDVIW.

2 disulfides stabilise this stretch: Cys-1–Cys-15 and Cys-3–Cys-11.

Belongs to the endothelin/sarafotoxin family. In terms of tissue distribution, expressed by the venom gland.

It localises to the secreted. In terms of biological role, vasoconstrictor activity. These toxins cause cardiac arrest probably as a result of coronary vasospasm. May act by displaying agonistic activities towards endothelin-1 and -2 receptors (EDNRA and EDNRB). This is Bibrotoxin from Atractaspis bibronii (Bibron's mole viper).